The chain runs to 62 residues: Large ribosomal subunit protein bL32m (62 aa).

The protein belongs to the bacterial ribosomal protein bL32 family.

It is found in the mitochondrion. The protein is Large ribosomal subunit protein bL32m (RPL32) of Reclinomonas americana.